The chain runs to 660 residues: Zinc transporter ZIP4 (660 aa).

The N-terminal stretch at 1–22 is a signal peptide; that stretch reads MLPKSVTQGLVLALLVGTVAVA. The Extracellular portion of the chain corresponds to 23–337; that stretch reads RPRNLLSLLA…QDQLSQTERY (315 aa). 3 disulfide bridges follow: cysteine 56–cysteine 61, cysteine 64–cysteine 110, and cysteine 160–cysteine 195. Asparagine 192 and asparagine 219 each carry an N-linked (GlcNAc...) asparagine glycan. The segment at 233 to 273 is disordered; it reads GVGGEDHSDHDDHGDHADHSHPDRKASHQDSELHTPHNSNS. The segment covering 236–267 has biased composition (basic and acidic residues); sequence GEDHSDHDDHGDHADHSHPDRKASHQDSELHT. Asparagine 272 carries N-linked (GlcNAc...) asparagine glycosylation. A disulfide bridge links cysteine 280 with cysteine 319. A helical membrane pass occupies residues 338–358; that stretch reads LYGSLATLLICLCAVFGLLLL. Topologically, residues 359–376 are cytoplasmic; sequence TCAKCSTATHYIMQTFLS. The chain crosses the membrane as a helical span at residues 377-397; the sequence is LAVGALTGDALLHLIPKVLGL. Topologically, residues 398 to 420 are extracellular; it reads HTHGGEGHTHEEEVGVGGQATWR. The chain crosses the membrane as a helical span at residues 421–441; the sequence is LLAVLGGFYIFFLFESFFNLL. At 442-511 the chain is on the cytoplasmic side; sequence LPRDQDSEKD…LRAELRLLPY (70 aa). The Essential for SLC39A4 endocytosis signature appears at 465-467; that stretch reads LQL. The helical transmembrane segment at 512–531 threads the bilayer; it reads LITLGDAVHNFADGLAVGAA. Zn(2+)-binding residues include histidine 520, asparagine 521, and aspartate 524. The Extracellular segment spans residues 532-539; it reads FSSSWKTG. A helical membrane pass occupies residues 540 to 566; it reads LATSLAVFCHELPHELGDFAALLHAGL. Histidine 549, glutamate 550, and histidine 553 together coordinate Zn(2+). Over 567–571 the chain is Cytoplasmic; that stretch reads SVKRA. A helical transmembrane segment spans residues 572–592; sequence LLLNLASALTAFAGLYVALAV. Topologically, residues 593 to 599 are extracellular; it reads GVGEEGE. Residues 600–620 form a helical membrane-spanning segment; the sequence is AWILAVATGLFLYVALCDMLP. The Cytoplasmic portion of the chain corresponds to 621-630; sequence AMMNVRDQRP. A helical transmembrane segment spans residues 631–651; the sequence is WLLFLLHNVGLLGGWTVLLLL. Residues 652–660 are Extracellular-facing; that stretch reads SLYEDNITF. Asparagine 657 is a glycosylation site (N-linked (GlcNAc...) asparagine).

The protein belongs to the ZIP transporter (TC 2.A.5) family. Homodimer. Homodimerization is mediated by the transmembrane domain. In terms of processing, the extracellular N-terminal ectodomain is cleaved when cells are Zn(2+) deficient, N-terminally cleaved SLC39A4 is then internalized faster. Post-translationally, under excess Zn(2+) conditions, SLC39A4 on the cell surface is rapidly endocytosed, ubiquitinated, and degraded. N-glycosylated. In terms of tissue distribution, highly expressed in the small intestine and embryonic visceral yolk sac. Weakly expressed in the stomach and liver.

The protein resides in the cell membrane. It is found in the recycling endosome membrane. Its subcellular location is the apical cell membrane. It carries out the reaction Zn(2+)(in) = Zn(2+)(out). Its function is as follows. Selective transporter that mediates the uptake of Zn(2+). Plays an essential role for dietary zinc uptake from small intestine. The Zn(2+) uniporter activity is regulated by zinc availability. Also exhibits polyspecific binding and transport of Cu(2+), Cd(2+) and possibly Ni(2+) but at higher concentrations. This is Zinc transporter ZIP4 (Slc39a4) from Mus musculus (Mouse).